The following is a 270-amino-acid chain: Glucosamine-6-phosphate deaminase (270 aa).

The active-site Proton acceptor; for enolization step is Asp72. Asp141 functions as the For ring-opening step in the catalytic mechanism. His143 (proton acceptor; for ring-opening step) is an active-site residue. The active-site For ring-opening step is Glu148.

The protein belongs to the glucosamine/galactosamine-6-phosphate isomerase family. NagB subfamily.

The catalysed reaction is alpha-D-glucosamine 6-phosphate + H2O = beta-D-fructose 6-phosphate + NH4(+). The protein operates within amino-sugar metabolism; N-acetylneuraminate degradation; D-fructose 6-phosphate from N-acetylneuraminate: step 5/5. Allosterically activated by N-acetylglucosamine 6-phosphate (GlcNAc6P). Its function is as follows. Catalyzes the reversible isomerization-deamination of glucosamine 6-phosphate (GlcN6P) to form fructose 6-phosphate (Fru6P) and ammonium ion. The protein is Glucosamine-6-phosphate deaminase of Treponema denticola (strain ATCC 35405 / DSM 14222 / CIP 103919 / JCM 8153 / KCTC 15104).